A 521-amino-acid polypeptide reads, in one-letter code: Bifunctional purine biosynthesis protein PurH (521 aa).

The MGS-like domain occupies 1 to 149; it reads MSDPVIKRAL…KNNESVTVVT (149 aa).

It belongs to the PurH family.

It carries out the reaction (6R)-10-formyltetrahydrofolate + 5-amino-1-(5-phospho-beta-D-ribosyl)imidazole-4-carboxamide = 5-formamido-1-(5-phospho-D-ribosyl)imidazole-4-carboxamide + (6S)-5,6,7,8-tetrahydrofolate. The catalysed reaction is IMP + H2O = 5-formamido-1-(5-phospho-D-ribosyl)imidazole-4-carboxamide. Its pathway is purine metabolism; IMP biosynthesis via de novo pathway; 5-formamido-1-(5-phospho-D-ribosyl)imidazole-4-carboxamide from 5-amino-1-(5-phospho-D-ribosyl)imidazole-4-carboxamide (10-formyl THF route): step 1/1. It participates in purine metabolism; IMP biosynthesis via de novo pathway; IMP from 5-formamido-1-(5-phospho-D-ribosyl)imidazole-4-carboxamide: step 1/1. This Chlorobium phaeobacteroides (strain DSM 266 / SMG 266 / 2430) protein is Bifunctional purine biosynthesis protein PurH.